We begin with the raw amino-acid sequence, 388 residues long: Mannitol-1-phosphate 5-dehydrogenase (388 aa).

5–16 serves as a coordination point for NAD(+); that stretch reads AIQFGGGNIGRG. Lys213 is a catalytic residue.

Belongs to the mannitol dehydrogenase family. In terms of assembly, monomer.

The enzyme catalyses D-mannitol 1-phosphate + NAD(+) = beta-D-fructose 6-phosphate + NADH + H(+). Catalyzes the NAD(H)-dependent interconversion of D-fructose 6-phosphate and D-mannitol 1-phosphate in the mannitol metabolic pathway. The polypeptide is Mannitol-1-phosphate 5-dehydrogenase (mpdA) (Aspergillus clavatus (strain ATCC 1007 / CBS 513.65 / DSM 816 / NCTC 3887 / NRRL 1 / QM 1276 / 107)).